The primary structure comprises 493 residues: Cobyric acid synthase (493 aa).

Residues 246–440 form the GATase cobBQ-type domain; sequence PIDIAVIKMP…IHGVFDGVVF (195 aa). Cys326 functions as the Nucleophile in the catalytic mechanism. The active site involves His432.

Belongs to the CobB/CobQ family. CobQ subfamily.

It participates in cofactor biosynthesis; adenosylcobalamin biosynthesis. In terms of biological role, catalyzes amidations at positions B, D, E, and G on adenosylcobyrinic A,C-diamide. NH(2) groups are provided by glutamine, and one molecule of ATP is hydrogenolyzed for each amidation. In Clostridium botulinum (strain Okra / Type B1), this protein is Cobyric acid synthase.